Reading from the N-terminus, the 99-residue chain is UPF0729 protein CG18508 (99 aa).

A disordered region spans residues 60-99 (PGGKKTENVSDDDAEESENPPLNATAMAAETEVDESKKEI). The segment covering 68–77 (VSDDDAEESE) has biased composition (acidic residues). S69 is modified (phosphoserine).

Belongs to the UPF0729 family.

This is UPF0729 protein CG18508 from Drosophila melanogaster (Fruit fly).